Consider the following 683-residue polypeptide: DNA-directed RNA polymerase subunit beta' (683 aa).

4 residues coordinate Zn(2+): Cys-69, Cys-71, Cys-87, and Cys-90. Positions 489, 491, and 493 each coordinate Mg(2+).

This sequence belongs to the RNA polymerase beta' chain family. RpoC1 subfamily. In terms of assembly, in plastids the minimal PEP RNA polymerase catalytic core is composed of four subunits: alpha, beta, beta', and beta''. When a (nuclear-encoded) sigma factor is associated with the core the holoenzyme is formed, which can initiate transcription. Mg(2+) serves as cofactor. It depends on Zn(2+) as a cofactor.

The protein localises to the plastid. Its subcellular location is the chloroplast. The catalysed reaction is RNA(n) + a ribonucleoside 5'-triphosphate = RNA(n+1) + diphosphate. Its function is as follows. DNA-dependent RNA polymerase catalyzes the transcription of DNA into RNA using the four ribonucleoside triphosphates as substrates. The polypeptide is DNA-directed RNA polymerase subunit beta' (Sorghum bicolor (Sorghum)).